The sequence spans 201 residues: Large ribosomal subunit protein uL4 (201 aa).

Positions alanine 45 to serine 72 are disordered.

Belongs to the universal ribosomal protein uL4 family. In terms of assembly, part of the 50S ribosomal subunit.

One of the primary rRNA binding proteins, this protein initially binds near the 5'-end of the 23S rRNA. It is important during the early stages of 50S assembly. It makes multiple contacts with different domains of the 23S rRNA in the assembled 50S subunit and ribosome. Functionally, forms part of the polypeptide exit tunnel. This Shewanella baltica (strain OS223) protein is Large ribosomal subunit protein uL4.